The chain runs to 454 residues: uncharacterized protein (454 aa).

Positions 364 to 405 constitute an HNH domain; that stretch reads CSRPGCDAPAYHSEVHHVTPWTTTHRTDINDLTLACGPDNRL. The disordered stretch occupies residues 415-434; sequence NAKGDTEWLPPAHLDHGQPR.

Belongs to the Rv1128c/1148c/1588c/1702c/1945/3466 family.

This is an uncharacterized protein from Mycobacterium tuberculosis (strain CDC 1551 / Oshkosh).